The following is a 103-amino-acid chain: Small ribosomal subunit protein uS10 (103 aa).

It belongs to the universal ribosomal protein uS10 family. Part of the 30S ribosomal subunit.

Its function is as follows. Involved in the binding of tRNA to the ribosomes. This chain is Small ribosomal subunit protein uS10, found in Idiomarina loihiensis (strain ATCC BAA-735 / DSM 15497 / L2-TR).